We begin with the raw amino-acid sequence, 373 residues long: Transmembrane protein adipocyte-associated 1 (373 aa).

N-linked (GlcNAc...) asparagine glycans are attached at residues asparagine 11 and asparagine 23. Helical transmembrane passes span 48-68, 76-96, 123-143, 151-171, 192-212, 234-254, and 265-285; these read LLLL…LPSA, SSPI…VGIA, FFLL…GHLE, VLAI…TLEI, QFWL…VILP, ILAL…FDII, and FLYF…GFFG. Asparagine 361 carries N-linked (GlcNAc...) asparagine glycosylation.

This sequence belongs to the UPF0359 family. As to expression, ubiquitous, with higher levels in heart, placenta and kidney.

Its subcellular location is the membrane. This Homo sapiens (Human) protein is Transmembrane protein adipocyte-associated 1 (TPRA1).